Here is a 1342-residue protein sequence, read N- to C-terminus: DNA-directed RNA polymerase subunit beta (1342 aa).

Belongs to the RNA polymerase beta chain family. The RNAP catalytic core consists of 2 alpha, 1 beta, 1 beta' and 1 omega subunit. When a sigma factor is associated with the core the holoenzyme is formed, which can initiate transcription.

The enzyme catalyses RNA(n) + a ribonucleoside 5'-triphosphate = RNA(n+1) + diphosphate. Functionally, DNA-dependent RNA polymerase catalyzes the transcription of DNA into RNA using the four ribonucleoside triphosphates as substrates. The protein is DNA-directed RNA polymerase subunit beta of Aeromonas salmonicida (strain A449).